We begin with the raw amino-acid sequence, 407 residues long: tRNA-specific 2-thiouridylase MnmA (407 aa).

ATP contacts are provided by residues 20-27 and Leu46; that span reads AMSGGVDS. Cys114 serves as the catalytic Nucleophile. Residues Cys114 and Cys210 are joined by a disulfide bond. Gly138 contacts ATP. An interaction with tRNA region spans residues 160–162; it reads RDQ. Cys210 functions as the Cysteine persulfide intermediate in the catalytic mechanism.

This sequence belongs to the MnmA/TRMU family.

Its subcellular location is the cytoplasm. The enzyme catalyses S-sulfanyl-L-cysteinyl-[protein] + uridine(34) in tRNA + AH2 + ATP = 2-thiouridine(34) in tRNA + L-cysteinyl-[protein] + A + AMP + diphosphate + H(+). Catalyzes the 2-thiolation of uridine at the wobble position (U34) of tRNA, leading to the formation of s(2)U34. The chain is tRNA-specific 2-thiouridylase MnmA from Bartonella tribocorum (strain CIP 105476 / IBS 506).